The chain runs to 644 residues: Kelch-like protein 34 (644 aa).

The 68-residue stretch at C29–M96 folds into the BTB domain. The region spanning C131 to S238 is the BACK domain. The interval A304–E329 is disordered. Acidic residues predominate over residues E313–E329. 6 Kelch repeats span residues E320–N366, F367–E425, R426–R473, V475–G526, V528–E571, and A573–L623.

The sequence is that of Kelch-like protein 34 (KLHL34) from Homo sapiens (Human).